The sequence spans 54 residues: Preprotein translocase subunit SecG (54 aa).

Topologically, residues 1–31 (MSSGQNSGGLMSSAGLVRYFDAEDRNSIRID) are cytoplasmic. A helical transmembrane segment spans residues 32 to 53 (PKTIVAFGVLFGVGVLVLNALA). Ile54 is a topological domain (extracellular).

It belongs to the SEC61-beta family. In terms of assembly, component of the protein translocase complex. Heterotrimer consisting of alpha (SecY), beta (SecG) and gamma (SecE) subunits. Can form oligomers of the heterotrimer.

It localises to the cell membrane. Its function is as follows. Involved in protein export. The function of the beta subunit is unknown, but it may be involved in stabilization of the trimeric complex. The protein is Preprotein translocase subunit SecG of Haloquadratum walsbyi (strain DSM 16790 / HBSQ001).